A 386-amino-acid chain; its full sequence is Flap endonuclease 1 (386 aa).

Positions 1 to 104 (MGILGLSKLI…GELAKRAERR (104 aa)) are N-domain. Asp-34 is a binding site for Mg(2+). DNA contacts are provided by Arg-47 and Arg-70. Residues Asp-86, Glu-158, Glu-160, Asp-179, and Asp-181 each coordinate Mg(2+). The I-domain stretch occupies residues 122-253 (EIEKFNRRLV…KRAIELINNY (132 aa)). Glu-158 lines the DNA pocket. Gly-231 and Asp-233 together coordinate DNA. Asp-233 contributes to the Mg(2+) binding site. Residues 336 to 344 (TQVRLDSFF) form an interaction with PCNA region. Residues 351–386 (PNAVHAAKRKAEEAKKSANNKKAKTSGGAARGRRPK) form a disordered region.

The protein belongs to the XPG/RAD2 endonuclease family. FEN1 subfamily. In terms of assembly, interacts with PCNA. Three molecules of FEN1 bind to one PCNA trimer with each molecule binding to one PCNA monomer. PCNA stimulates the nuclease activity without altering cleavage specificity. The cofactor is Mg(2+). In terms of processing, phosphorylated. Phosphorylation upon DNA damage induces relocalization to the nuclear plasma.

It localises to the nucleus. Its subcellular location is the nucleolus. The protein resides in the nucleoplasm. The protein localises to the mitochondrion. In terms of biological role, structure-specific nuclease with 5'-flap endonuclease and 5'-3' exonuclease activities involved in DNA replication and repair. During DNA replication, cleaves the 5'-overhanging flap structure that is generated by displacement synthesis when DNA polymerase encounters the 5'-end of a downstream Okazaki fragment. It enters the flap from the 5'-end and then tracks to cleave the flap base, leaving a nick for ligation. Also involved in the long patch base excision repair (LP-BER) pathway, by cleaving within the apurinic/apyrimidinic (AP) site-terminated flap. Acts as a genome stabilization factor that prevents flaps from equilibrating into structures that lead to duplications and deletions. Also possesses 5'-3' exonuclease activity on nicked or gapped double-stranded DNA, and exhibits RNase H activity. Also involved in replication and repair of rDNA and in repairing mitochondrial DNA. This is Flap endonuclease 1 from Drosophila persimilis (Fruit fly).